We begin with the raw amino-acid sequence, 734 residues long: MNSKVSSPTLLEALSSDFLACKICLEQLHTPKTLPCLHTYCQDCLAQLDIGGQVRCPECREIVPVPAEGVAAFKTNFFVNGLLDLVKARAPGDVHSGKPTCALCPLVGGKSSGGPATARCLDCADDLCQACADGHRCSRQTHKHRVVDLVGYRAGWYDEEARERQASQCPQHPGEALCFLCQPCSQLLCKDCRLGPHIDHPCLPLAEAVRSRKPGLEELLAGVDSNLVELEATRVAEKEALALLREQAASVGTQVEEAAERILKSLLAQKQEVLGQLRALVEAAEEATRERLTKIERQEQVAKAAAAFARRVLSLGLEAEILSLEGAITQRLRQLQDAPWTSGPTRCVLPQLELHPGLEDKNCHLLRLIFEEPKQSPKDSGKGGAGTQGGDEAQGQGDDRTKIGKQGGAQPLTPKEGKDQNPQEDDGVFIERGNRPNKKKKCKGRGKSVSREPSPILRPNLEGSGLLPRPVFSWSFPTRMPGDKRSPRITGLCPYGPQEILVADEQNRVLKRFSLNGDYKGTVQVPEGCSPCSVAALQNAVAFSANAKLYLVSPDGEIQWRRSLSLTQSSHAVAAMPCGDRVAVSVAGHVEVYKKDGSLATRFIPGGKASRGQRALVFLTTSPQGNFVGSDWQQNSVVFCDGLGQVIWEYKGPGLHGCQPGSVSVDKKGYIFLTLREVNKVVILDPKGSLLGDFLTAYHGLEKPRVTTMVDGKYLVVSLSNGTIHVFRVRFPDS.

The RING-type zinc finger occupies 21–60 (CKICLEQLHTPKTLPCLHTYCQDCLAQLDIGGQVRCPECR). 2 consecutive B box-type zinc fingers follow at residues 98–149 (KPTC…VVDL) and 164–205 (RQAS…CLPL). 4 residues coordinate Zn(2+): Cys-169, His-172, Cys-192, and His-197. Residues 215–303 (GLEELLAGVD…KIERQEQVAK (89 aa)) adopt a coiled-coil conformation. Residues 372–381 (EPKQSPKDSG) are compositionally biased toward basic and acidic residues. Positions 372-463 (EPKQSPKDSG…SPILRPNLEG (92 aa)) are disordered. A compositionally biased stretch (basic residues) spans 435-448 (RPNKKKKCKGRGKS). Phosphoserine is present on Ser-454.

It belongs to the TRIM/RBCC family. Interacts with STING1. Interacts with TICAM1.

Its subcellular location is the cytoplasm. It carries out the reaction S-ubiquitinyl-[E2 ubiquitin-conjugating enzyme]-L-cysteine + [acceptor protein]-L-lysine = [E2 ubiquitin-conjugating enzyme]-L-cysteine + N(6)-ubiquitinyl-[acceptor protein]-L-lysine.. It participates in protein modification; protein ubiquitination. Its function is as follows. E3 ubiquitin-protein ligase that plays a key role in innate antiviral immunity by mediating ubiquitination of CGAS and STING1. In response to pathogen- and host-derived double-stranded DNA (dsDNA), targets STING1 to 'Lys-63'-linked ubiquitination, thereby promoting its homodimerization, a step required for the production of type I interferon IFN-beta. Also mediates monoubiquitination of CGAS, thereby promoting CGAS oligomerization and subsequent activation. Independently of its E3 ubiquitin ligase activity, positive regulator of TLR3 signaling. Potentiates extracellular double stranded RNA (dsRNA)-induced expression of IFNB1 and interferon-stimulated genes ISG15, IFIT1/ISG56, CXCL10, OASL and CCL5/RANTES. The protein is E3 ubiquitin-protein ligase TRIM56 of Mus musculus (Mouse).